The sequence spans 591 residues: Oxaloacetate decarboxylase alpha chain (591 aa).

Residues I3–E263 form the Pyruvate carboxyltransferase domain. Positions P518–A591 constitute a Biotinyl-binding domain. Residue K557 is modified to N6-biotinyllysine.

In terms of assembly, composed of three chains (alpha, beta, and gamma). Biotin is required as a cofactor.

It carries out the reaction oxaloacetate + 2 Na(+)(in) + H(+) = pyruvate + 2 Na(+)(out) + CO2. In terms of biological role, catalyzes the decarboxylation of oxaloacetate coupled to Na(+) translocation. In Salmonella typhi, this protein is Oxaloacetate decarboxylase alpha chain (oadA1).